The following is a 51-amino-acid chain: uncharacterized protein (51 aa).

Residues 3–30 are a coiled coil; it reads EEKAVSLAKEIIELDIKRDEMLETFMQL.

This is an uncharacterized protein from Bacillus subtilis (strain 168).